Consider the following 910-residue polypeptide: Protein CHROMATIN REMODELING 25 (910 aa).

Acidic residues-rich tracts occupy residues 1–18 (MEEE…DDSS) and 26–39 (QDSE…ECED). Positions 1–39 (MEEEDEEILSSSDCDDSSDSYKDDSQDSEGENDNPECED) are disordered. The region spanning 198–371 (LHGSANINGC…FAMVNFTNPG (174 aa)) is the Helicase ATP-binding domain. 211-218 (DDMGLGKT) contributes to the ATP binding site. The DEAH box signature appears at 322 to 325 (DEAH). Positions 396–417 (TEEEKNLAADRSAELSSKVNQF) form a coiled coil. A Helicase C-terminal domain is found at 538-696 (VLSRLLANLR…QTDNSTRQGN (159 aa)). Positions 828–861 (VSPKTVESEEHNRNQPVNKRAFNKPQQRPREPLQ) are disordered.

Belongs to the SNF2/RAD54 helicase family. Interacts with RAD51. Binds to the geminivirus mungbean yellow mosaic virus (MYMV) and to the tomato leaf curl virus (ToLCV) replication-associated proteins. As to expression, expressed ubiquitously, with the highest levels of expression in flower buds. Present in flower buds (at protein level).

Its subcellular location is the nucleus. Its function is as follows. Dissociates RAD51 from nucleoprotein filaments formed on dsDNA. Could be involved in the turnover of RAD51 protein-dsDNA filaments. Addition of RAD54 overcomes inhibition of DNA strand exchange by RAD51 bound to substrate dsDNA. Species preference in the RAD51 dissociation and DNA strand exchange assays underlines the importance of specific RAD54-RAD51 interactions. RAD51 is unable to release dsDNA upon ATP hydrolysis, leaving it stuck on the heteroduplex DNA product after DNA strand exchange. Involved in DNA repair and mitotic recombination. Functions in the homologous recombinational DNA repair (RAD52) pathway. Required for synthesis-dependent strand annealing (SDSA) during double-strand break repair. Facilitates geminiviral replication (e.g. geminivirus mungbean yellow mosaic virus (MYMV) and tomato leaf curl virus (ToLCV)). This is Protein CHROMATIN REMODELING 25 (CHR25) from Arabidopsis thaliana (Mouse-ear cress).